Consider the following 210-residue polypeptide: Ribosomal RNA large subunit methyltransferase E (210 aa).

S-adenosyl-L-methionine contacts are provided by glycine 61, tryptophan 63, aspartate 81, aspartate 97, and aspartate 122. The active-site Proton acceptor is lysine 162.

Belongs to the class I-like SAM-binding methyltransferase superfamily. RNA methyltransferase RlmE family.

The protein localises to the cytoplasm. The enzyme catalyses uridine(2552) in 23S rRNA + S-adenosyl-L-methionine = 2'-O-methyluridine(2552) in 23S rRNA + S-adenosyl-L-homocysteine + H(+). Specifically methylates the uridine in position 2552 of 23S rRNA at the 2'-O position of the ribose in the fully assembled 50S ribosomal subunit. This Xanthomonas oryzae pv. oryzae (strain MAFF 311018) protein is Ribosomal RNA large subunit methyltransferase E.